The sequence spans 97 residues: uncharacterized protein (97 aa).

Residues 58–97 are disordered; it reads SLLLPRTVQTGGTEREKPGPGQRKRGAHCSACKRSSTRPS.

This is an uncharacterized protein from Homo sapiens (Human).